We begin with the raw amino-acid sequence, 856 residues long: Dynamin-1 (856 aa).

The region spanning 28-294 (DLDLPQIAVV…LTNHIRDTLP (267 aa)) is the Dynamin-type G domain. The G1 motif stretch occupies residues 38–45 (GGQSAGKS). GDP contacts are provided by Ser-41, Gly-43, Lys-44, Ser-45, Ser-46, Arg-59, and Gly-60. A G2 motif region spans residues 64 to 66 (VTR). Residue Tyr-80 is modified to Phosphotyrosine. Position 125 is a 3'-nitrotyrosine; alternate (Tyr-125). Phosphotyrosine; alternate is present on Tyr-125. Positions 136–139 (DLPG) are G3 motif. The tract at residues 205–208 (TKLD) is G4 motif. GDP contacts are provided by Lys-206, Asp-208, Asp-211, Asn-236, Arg-237, and Gln-239. Residues 235–238 (VNRS) form a G5 motif region. Residues Ser-306 and Ser-347 each carry the phosphoserine modification. Tyr-354 carries the post-translational modification Phosphotyrosine. A Phosphoserine modification is found at Ser-512. Residues 519 to 625 (LVIRKGWLTI…WKASFLRAGV (107 aa)) enclose the PH domain. The 92-residue stretch at 659-750 (VETIRNLVDS…IIGDINTTTV (92 aa)) folds into the GED domain. Residues 750 to 856 (VSTPMPPPVD…PIGSGKSIPS (107 aa)) form a disordered region. Positions 763–781 (LQVQSVPTGRRSPTSSPTP) are enriched in polar residues. A phosphoserine mark is found at Ser-774 and Ser-778. The residue at position 796 (Arg-796) is an Omega-N-methylarginine. Ser-822 carries the post-translational modification Phosphoserine. A compositionally biased stretch (pro residues) spans 825 to 844 (PFGPPPQVPSRPNRAPPGVP).

This sequence belongs to the TRAFAC class dynamin-like GTPase superfamily. Dynamin/Fzo/YdjA family. Homodimer; homodimerization is mediated by the dynamin-type G domain which promotes assembly-stimulated GTPase activity. Homo-tetramer formed from two dimers in the absence of lipid. Oligomerizes into a helical polymer that self-assembles around the vesicle membrane, when associated to the menbrane through lipid binding. Interacts (via C-terminal proline-rich domain (PRD)) with SNX9 (via SH3 domain); this interaction allows regulation of DNM1 self-assembly during late stages of endocytic vesicle formation and supports DNM1's early functions in accelerating clathrin-coated pits (CCPs) maturation in non neuronals cell. Interacts (via C-terminal proline-rich domain (PRD)) with MYO1E (via SH3 domain); this interaction regulates receptor-mediated endocytosis. Interacts with SNX33 (via SH3 domain); this interaction decreases DNM1-dependent endocytosis. Interacts with DIAPH1. Interacts with GRB2 (via SH3 domain); this interaction mediates disassembly of DNM1 polymers, therefore modulates self-assembly. Forms a complex with BIN1 (via SH3 domain) and SH3GL2 (via SH3 domain). Forms a complex with SH3GL2 (via SH3 domain) and AMPH (via SH3 domain). Forms a complex with SH3GL2 (via SH3 domain) and SYNJ1. Interacts with AMPH. Interacts (via C-terminal proline-rich domain (PRD)) with SYT1; this interaction facilitates vesicle fission during clathrin-mediated endocytosis (CME). Interacts (via C-terminal proline-rich domain (PRD)) with PLCG1 (via SH3 domain); this interaction stimulates the release of GDP from DNM1 and enhances DNM1-dependent endocytosis. Interacts with SNPH; this interaction inhibits the binding of DNM1 to AMPH and DNM1-receptor-mediated endocytosis. Interacts with CAV1. Interacts with SH3GLB1 (via SH3 domain). Interacts with PACSIN1 (via SH3 domain), PACSIN2 (via SH3 domain) and PACSIN3 (via SH3 domain). Interacts with UNC119; this interaction decreases DNM1's GTPase activity and affects DNM1's interaction with AMPH. Interacts with AMPH. Interacts (GTP-bound form) with DNAJC6; this interaction allows clathrin-coated vesicle (CCV) formation at the plasma membrane. Post-translationally, phosphorylation at Ser-774 by GSK3B/GSK3-beta leads to inactivation of receptor-mediated endocytosis in non-neuronal cells. Dephosphorylation at Ser-774, through the EGFR downstream signaling, leads to activation and regulates early stages of clathrin-mediated endocytosis (CME).

The protein localises to the cell membrane. The protein resides in the membrane. It is found in the clathrin-coated pit. It localises to the cytoplasmic vesicle. Its subcellular location is the presynapse. The protein localises to the secretory vesicle. The protein resides in the chromaffin granule. It carries out the reaction GTP + H2O = GDP + phosphate + H(+). Catalyzes the hydrolysis of GTP and utilizes this energy to mediate vesicle scission and participates in many forms of endocytosis, such as clathrin-mediated endocytosis or synaptic vesicle endocytosis as well as rapid endocytosis (RE). Associates to the membrane, through lipid binding, and self-assembles into rings and stacks of interconnected rings through oligomerization to form a helical polymer around the vesicle membrane leading to constriction of invaginated coated pits around their necks. Self-assembly of the helical polymer induces membrane tubules narrowing until the polymer reaches a length sufficient to trigger GTP hydrolysis. Depending on the curvature imposed on the tubules, membrane detachment from the helical polymer upon GTP hydrolysis can cause spontaneous hemifission followed by complete fission. May play a role in regulating early stages of clathrin-mediated endocytosis in non-neuronal cells through its activation by dephosphorylation via the signaling downstream of EGFR. Controls vesicle size at a step before fission, during formation of membrane pits, at hippocampal synapses. Controls plastic adaptation of the synaptic vesicle recycling machinery to high levels of activity. Mediates rapid endocytosis (RE), a Ca(2+)-dependent and clathrin- and K(+)-independent process in chromaffin cells. Microtubule-associated force-producing protein involved in producing microtubule bundles and able to bind and hydrolyze GTP. Through its interaction with DNAJC6, acts during the early steps of clathrin-coated vesicle (CCV) formation. The polypeptide is Dynamin-1 (Bos taurus (Bovine)).